Here is an 873-residue protein sequence, read N- to C-terminus: Zinc fingers and homeoboxes protein 1 (873 aa).

A disordered region spans residues 1–63 (MASRRKSTTP…ESVDSDNQQN (63 aa)). The span at 18–30 (QDPDLELISDLDE) shows a compositional bias: acidic residues. Residue Thr36 is modified to Phosphothreonine. 3 positions are modified to phosphoserine: Ser45, Ser47, and Ser48. 2 consecutive C2H2-type zinc fingers follow at residues 70-93 (YECKYCTFQTPDLNMFTFHVDSEH) and 102-125 (YVCVECNFLTKRYDALSEHNLKYH). A Glycyl lysine isopeptide (Lys-Gly) (interchain with G-Cter in SUMO2) cross-link involves residue Lys159. Ser202 is subject to Phosphoserine. A disordered region spans residues 202-236 (SVEDVPEEKENEIKPDREEIVENPSSSASESNTST). The span at 212–221 (NEIKPDREEI) shows a compositional bias: basic and acidic residues. Residues 223-236 (ENPSSSASESNTST) are compositionally biased toward low complexity. Residues 272–432 (NSNLIPKVLI…QNNVQKSQVP (161 aa)) form a required for dimerization region. A required for interaction with NFYA region spans residues 272-564 (NSNLIPKVLI…AQPKQSWNPF (293 aa)). A DNA-binding region (homeobox 1) is located at residues 284–346 (NSIPTYNAAL…LKHGVSWTPE (63 aa)). Glycyl lysine isopeptide (Lys-Gly) (interchain with G-Cter in SUMO2) cross-links involve residues Lys441, Lys454, Lys485, and Lys629. 2 consecutive DNA-binding regions (homeobox) follow at residues 464–526 (SFGI…KSNQ) and 569–630 (PQKF…EEKM). Disordered stretches follow at residues 626–667 (KEEK…ICKK) and 732–769 (SSMNGLSSLRKRGRGRPKGRGRGRPRGRPRGSKRINNW). The residue at position 648 (Ser648) is a Phosphoserine. A DNA-binding region (homeobox 4) is located at residues 660–722 (STGKICKKTP…YAWKNGNLKW (63 aa)). A required for nuclear localization region spans residues 734-768 (MNGLSSLRKRGRGRPKGRGRGRPRGRPRGSKRINN). Positions 740-764 (LRKRGRGRPKGRGRGRPRGRPRGSK) are enriched in basic residues. At Ser774 the chain carries Phosphoserine. The homeobox 5 DNA-binding region spans 777 to 832 (KFKTGTAILKDYYLKHKFLNEQDLDELVNKSHMGYEQVREWFAERQRRSELGIELF). The disordered stretch occupies residues 829-873 (IELFEENEEEDEVIDDQEEDEEETDDSDTWEPPRHVKRKLSKSDD). Residues 831–857 (LFEENEEEDEVIDDQEEDEEETDDSDT) are compositionally biased toward acidic residues. Residues 831–873 (LFEENEEEDEVIDDQEEDEEETDDSDTWEPPRHVKRKLSKSDD) form a required for repressor activity region. Over residues 863–873 (HVKRKLSKSDD) the composition is skewed to basic residues.

Belongs to the ZHX family. Forms homodimers. Also forms heterodimers with ZHX3 which is a prerequisite for repressor activity and with ZHX2. Interacts with NFYA. Interacts with ATF7IP.

It is found in the nucleus. In terms of biological role, acts as a transcriptional repressor. The sequence is that of Zinc fingers and homeoboxes protein 1 (ZHX1) from Gorilla gorilla gorilla (Western lowland gorilla).